The primary structure comprises 257 residues: Isoprenyl transferase (257 aa).

Aspartate 37 is a catalytic residue. Position 37 (aspartate 37) interacts with Mg(2+). Residues 38–41 (GNGR), tryptophan 42, arginine 50, histidine 54, and 82–84 (STE) contribute to the substrate site. The active-site Proton acceptor is asparagine 85. Substrate-binding positions include tryptophan 86, arginine 88, arginine 205, and 211 to 213 (RLS). Glutamate 224 contributes to the Mg(2+) binding site.

This sequence belongs to the UPP synthase family. Homodimer. Requires Mg(2+) as cofactor.

Its function is as follows. Catalyzes the condensation of isopentenyl diphosphate (IPP) with allylic pyrophosphates generating different type of terpenoids. This chain is Isoprenyl transferase, found in Shouchella clausii (strain KSM-K16) (Alkalihalobacillus clausii).